Reading from the N-terminus, the 92-residue chain is Small ribosomal subunit protein uS19 (92 aa).

This sequence belongs to the universal ribosomal protein uS19 family.

In terms of biological role, protein S19 forms a complex with S13 that binds strongly to the 16S ribosomal RNA. The polypeptide is Small ribosomal subunit protein uS19 (rpsS) (Geobacillus stearothermophilus (Bacillus stearothermophilus)).